The following is a 184-amino-acid chain: Calmodulin-related protein (184 aa).

EF-hand domains lie at 8-43 (DQIS…LGQN), 44-79 (PTEA…KMKD), 81-116 (DSEE…LGEK), and 117-152 (LTDE…NRRR). Ca(2+)-binding residues include Asp21, Asp23, Asp25, Cys27, Glu32, Asp57, Asp59, Asn61, Thr63, Glu68, Asp94, Asp96, Asn98, and Glu105. Lys116 carries the N6,N6,N6-trimethyllysine modification. Positions 130, 132, 134, 136, and 141 each coordinate Ca(2+). The tract at residues 156 to 184 (EESKRSVNSNISRSNNGRKVRKRDRCTIL) is disordered. The segment covering 161-170 (SVNSNISRSN) has biased composition (low complexity). Over residues 171–184 (NGRKVRKRDRCTIL) the composition is skewed to basic residues.

The protein belongs to the calmodulin family.

In terms of biological role, calmodulin mediates the control of a large number of enzymes, ion channels and other proteins by Ca(2+). Among the enzymes to be stimulated by the calmodulin-Ca(2+) complex are a number of protein kinases and phosphatases. The polypeptide is Calmodulin-related protein (CAM53) (Petunia hybrida (Petunia)).